A 606-amino-acid chain; its full sequence is Aspartate--tRNA(Asp/Asn) ligase (606 aa).

E175 provides a ligand contact to L-aspartate. Positions 199–202 (QLFK) are aspartate. R221 is a binding site for L-aspartate. ATP contacts are provided by residues 221–223 (RDE) and Q230. Residue H453 participates in L-aspartate binding. E487 lines the ATP pocket. Residue R494 participates in L-aspartate binding. Residue 539–542 (GWDR) participates in ATP binding. The disordered stretch occupies residues 564–606 (GGVDPLTDAPGTIPAEQRKETGVDFKPEKAAKAAQGEKAGKES). Residues 579-594 (EQRKETGVDFKPEKAA) are compositionally biased toward basic and acidic residues.

It belongs to the class-II aminoacyl-tRNA synthetase family. Type 1 subfamily. Homodimer.

It is found in the cytoplasm. The catalysed reaction is tRNA(Asx) + L-aspartate + ATP = L-aspartyl-tRNA(Asx) + AMP + diphosphate. Aspartyl-tRNA synthetase with relaxed tRNA specificity since it is able to aspartylate not only its cognate tRNA(Asp) but also tRNA(Asn). Reaction proceeds in two steps: L-aspartate is first activated by ATP to form Asp-AMP and then transferred to the acceptor end of tRNA(Asp/Asn). This is Aspartate--tRNA(Asp/Asn) ligase from Corynebacterium aurimucosum (strain ATCC 700975 / DSM 44827 / CIP 107346 / CN-1) (Corynebacterium nigricans).